Reading from the N-terminus, the 442-residue chain is 5'-deoxyadenosine deaminase (442 aa).

Zn(2+) contacts are provided by H72 and H74. The substrate site is built by E101 and H193. Zn(2+) is bound at residue H220. The substrate site is built by E223 and D309. D309 is a Zn(2+) binding site.

It belongs to the metallo-dependent hydrolases superfamily. MTA/SAH deaminase family. In terms of assembly, homotetramer. The cofactor is Zn(2+).

It carries out the reaction 5'-deoxyadenosine + H2O + H(+) = 5'-deoxyinosine + NH4(+). The enzyme catalyses S-adenosyl-L-homocysteine + H2O + H(+) = S-inosyl-L-homocysteine + NH4(+). It catalyses the reaction S-methyl-5'-thioadenosine + H2O + H(+) = S-methyl-5'-thioinosine + NH4(+). The catalysed reaction is adenosine + H2O + H(+) = inosine + NH4(+). It participates in amino-acid biosynthesis; S-adenosyl-L-methionine biosynthesis. In terms of biological role, catalyzes the deamination of three SAM-derived enzymatic products, namely 5'-deoxyadenosine, S-adenosyl-L-homocysteine, and 5'-methylthioadenosine, to produce the inosine analogs. Can also deaminate adenosine. The preferred substrate for this enzyme is 5'-deoxyadenosine, but all these substrates are efficiently deaminated. Likely functions in a S-adenosyl-L-methionine (SAM) recycling pathway from S-adenosyl-L-homocysteine (SAH) produced from SAM-dependent methylation reactions. May also be involved in the recycling of 5'-deoxyadenosine, whereupon the 5'-deoxyribose moiety of 5'-deoxyinosine is further metabolized to deoxyhexoses used for the biosynthesis of aromatic amino acids in methanogens. This Methanoregula boonei (strain DSM 21154 / JCM 14090 / 6A8) protein is 5'-deoxyadenosine deaminase.